Here is a 135-residue protein sequence, read N- to C-terminus: Small ribosomal subunit protein uS12 (135 aa).

Asp89 carries the 3-methylthioaspartic acid modification. The segment at Ser101–Arg135 is disordered. Residues Lys116–Arg135 are compositionally biased toward low complexity.

It belongs to the universal ribosomal protein uS12 family. Part of the 30S ribosomal subunit. Contacts proteins S8 and S17. May interact with IF1 in the 30S initiation complex.

Its function is as follows. With S4 and S5 plays an important role in translational accuracy. In terms of biological role, interacts with and stabilizes bases of the 16S rRNA that are involved in tRNA selection in the A site and with the mRNA backbone. Located at the interface of the 30S and 50S subunits, it traverses the body of the 30S subunit contacting proteins on the other side and probably holding the rRNA structure together. The combined cluster of proteins S8, S12 and S17 appears to hold together the shoulder and platform of the 30S subunit. The polypeptide is Small ribosomal subunit protein uS12 (Chlorobium phaeobacteroides (strain DSM 266 / SMG 266 / 2430)).